A 97-amino-acid chain; its full sequence is Putative defensin-like protein 227 (97 aa).

The N-terminal stretch at 1 to 26 (MKWATLFMVSCVLMFFVMNNINEVES) is a signal peptide. 4 disulfide bridges follow: Cys35–Cys97, Cys45–Cys76, Cys53–Cys91, and Cys74–Cys93.

It belongs to the DEFL family.

The protein localises to the secreted. In Arabidopsis thaliana (Mouse-ear cress), this protein is Putative defensin-like protein 227 (SCRL28).